Consider the following 465-residue polypeptide: VGFKAGVKDYKLTYYTPEYVTKDTDILAAFRVTPQPGVPPEEAGAAVAAESSTGTWTTVWTDGLTSLDRYKGRCYNIEPVAGEENQYICYVAYPLDLFEEGSVTNMFTSIVGNVFGFKALRALRLEDLRIPPAYSKTFQGPPHGIQVERDKLNKYGRPLLGCTIKPKLGLSAKNYGRAVYECLRGGLDFTKDDENVNSQPFMRWRDRFLFCAEAIFKSQAETGEIKGHYLNATAGTCEEMIKRAVFARELGVPIVMHDYLTGGFTANTSLAHYCRDNGLLLHIHRAMHAVIDRQKNHGMHFRVLAKALRMSGGDHIHAGTVVGKLEGERDITLGFVDLLRDDFIEKDRSRGIYFTQDWVSLPGVLPVASGGIHVWHMPALTEIFGDDSVLQFGGGTLGHPWGNAPGAVANRVALEACVQARNEGRDLAREGNEIIREASKWSAELAAACEVWKEIKFQFEAMDTL.

K4 is modified (N6,N6,N6-trimethyllysine). Substrate contacts are provided by N113 and T163. The active-site Proton acceptor is K165. Substrate is bound at residue K167. K191, D193, and E194 together coordinate Mg(2+). An N6-carboxylysine modification is found at K191. The Proton acceptor role is filled by H284. The substrate site is built by R285, H317, and S369.

This sequence belongs to the RuBisCO large chain family. Type I subfamily. In terms of assembly, heterohexadecamer of 8 large chains and 8 small chains; disulfide-linked. The disulfide link is formed within the large subunit homodimers. Requires Mg(2+) as cofactor. In terms of processing, the disulfide bond which can form in the large chain dimeric partners within the hexadecamer appears to be associated with oxidative stress and protein turnover.

The protein resides in the plastid. The protein localises to the chloroplast. It catalyses the reaction 2 (2R)-3-phosphoglycerate + 2 H(+) = D-ribulose 1,5-bisphosphate + CO2 + H2O. It carries out the reaction D-ribulose 1,5-bisphosphate + O2 = 2-phosphoglycolate + (2R)-3-phosphoglycerate + 2 H(+). RuBisCO catalyzes two reactions: the carboxylation of D-ribulose 1,5-bisphosphate, the primary event in carbon dioxide fixation, as well as the oxidative fragmentation of the pentose substrate in the photorespiration process. Both reactions occur simultaneously and in competition at the same active site. This Acer saccharum (Sugar maple) protein is Ribulose bisphosphate carboxylase large chain.